The chain runs to 95 residues: Aspartyl/glutamyl-tRNA(Asn/Gln) amidotransferase subunit C (95 aa).

Belongs to the GatC family. In terms of assembly, heterotrimer of A, B and C subunits.

It carries out the reaction L-glutamyl-tRNA(Gln) + L-glutamine + ATP + H2O = L-glutaminyl-tRNA(Gln) + L-glutamate + ADP + phosphate + H(+). The catalysed reaction is L-aspartyl-tRNA(Asn) + L-glutamine + ATP + H2O = L-asparaginyl-tRNA(Asn) + L-glutamate + ADP + phosphate + 2 H(+). Its function is as follows. Allows the formation of correctly charged Asn-tRNA(Asn) or Gln-tRNA(Gln) through the transamidation of misacylated Asp-tRNA(Asn) or Glu-tRNA(Gln) in organisms which lack either or both of asparaginyl-tRNA or glutaminyl-tRNA synthetases. The reaction takes place in the presence of glutamine and ATP through an activated phospho-Asp-tRNA(Asn) or phospho-Glu-tRNA(Gln). This Halorhodospira halophila (strain DSM 244 / SL1) (Ectothiorhodospira halophila (strain DSM 244 / SL1)) protein is Aspartyl/glutamyl-tRNA(Asn/Gln) amidotransferase subunit C.